Here is a 362-residue protein sequence, read N- to C-terminus: Oxygen-dependent coproporphyrinogen-III oxidase (362 aa).

The interval 12–31 (RQENDQSTPQLELPPTDSRD) is disordered. S118 lines the substrate pocket. 2 residues coordinate a divalent metal cation: H122 and H132. Residue H132 is the Proton donor of the active site. Substrate is bound at residue 134-136 (NYR). Residues H166 and H196 each coordinate a divalent metal cation. The tract at residues 286–321 (YVEFNLVWDRGTIFGLQTNGRTESILMSLPPLVRWE) is important for dimerization.

This sequence belongs to the aerobic coproporphyrinogen-III oxidase family. Homodimer. A divalent metal cation is required as a cofactor.

The protein resides in the cytoplasm. The catalysed reaction is coproporphyrinogen III + O2 + 2 H(+) = protoporphyrinogen IX + 2 CO2 + 2 H2O. It participates in porphyrin-containing compound metabolism; protoporphyrin-IX biosynthesis; protoporphyrinogen-IX from coproporphyrinogen-III (O2 route): step 1/1. Functionally, involved in the heme and chlorophyll biosynthesis. Catalyzes the aerobic oxidative decarboxylation of propionate groups of rings A and B of coproporphyrinogen-III to yield the vinyl groups in protoporphyrinogen-IX. The polypeptide is Oxygen-dependent coproporphyrinogen-III oxidase (Synechococcus sp. (strain CC9902)).